Here is a 101-residue protein sequence, read N- to C-terminus: UPF0125 protein VC_0850 (101 aa).

Belongs to the UPF0125 (RnfH) family.

The chain is UPF0125 protein VC_0850 from Vibrio cholerae serotype O1 (strain ATCC 39315 / El Tor Inaba N16961).